The following is a 228-amino-acid chain: Sec-independent protein translocase protein TatB (228 aa).

Residues 1-21 (MFDFGLGELIFVGIIALIVLG) traverse the membrane as a helical segment. 2 disordered regions span residues 106-164 (TPAD…TDKD) and 196-228 (VPHT…VRKS). Residues 135 to 151 (PSERSDTSAETLGDDRQ) show a composition bias toward basic and acidic residues. The segment covering 206–228 (AINRKRDFRPKHRAKPKLRVRKS) has biased composition (basic residues).

It belongs to the TatB family. In terms of assembly, the Tat system comprises two distinct complexes: a TatABC complex, containing multiple copies of TatA, TatB and TatC subunits, and a separate TatA complex, containing only TatA subunits. Substrates initially bind to the TatABC complex, which probably triggers association of the separate TatA complex to form the active translocon.

It is found in the cell inner membrane. In terms of biological role, part of the twin-arginine translocation (Tat) system that transports large folded proteins containing a characteristic twin-arginine motif in their signal peptide across membranes. Together with TatC, TatB is part of a receptor directly interacting with Tat signal peptides. TatB may form an oligomeric binding site that transiently accommodates folded Tat precursor proteins before their translocation. The protein is Sec-independent protein translocase protein TatB of Neisseria gonorrhoeae (strain ATCC 700825 / FA 1090).